The primary structure comprises 624 residues: Carbon monoxide dehydrogenase (624 aa).

[4Fe-4S] cluster contacts are provided by Cys37, Cys46, Cys49, Cys54, and Cys65. [Ni-4Fe-5S] cluster is bound by residues His256, Cys292, Cys336, Cys444, Cys475, and Cys516.

Belongs to the Ni-containing carbon monoxide dehydrogenase family. In terms of assembly, homodimer. It depends on [4Fe-4S] cluster as a cofactor. [Ni-4Fe-5S] cluster is required as a cofactor.

It catalyses the reaction CO + 2 oxidized [2Fe-2S]-[ferredoxin] + H2O = 2 reduced [2Fe-2S]-[ferredoxin] + CO2 + 2 H(+). CODH oxidizes carbon monoxide coupled, via CooF, to the reduction of a hydrogen cation by a hydrogenase (possibly CooH). The polypeptide is Carbon monoxide dehydrogenase (cooS) (Methanocaldococcus jannaschii (strain ATCC 43067 / DSM 2661 / JAL-1 / JCM 10045 / NBRC 100440) (Methanococcus jannaschii)).